The chain runs to 328 residues: GMP reductase (328 aa).

The Thioimidate intermediate role is filled by Cys-176. 205–228 contributes to the NADP(+) binding site; it reads IIADGGIRTHGDIAKSIRFGASMI.

Belongs to the IMPDH/GMPR family. GuaC type 2 subfamily.

The catalysed reaction is IMP + NH4(+) + NADP(+) = GMP + NADPH + 2 H(+). Catalyzes the irreversible NADPH-dependent deamination of GMP to IMP. It functions in the conversion of nucleobase, nucleoside and nucleotide derivatives of G to A nucleotides, and in maintaining the intracellular balance of A and G nucleotides. The protein is GMP reductase of Streptococcus pneumoniae serotype 19F (strain G54).